The sequence spans 182 residues: MDSIVSSSTILMRSYLTPPVRSCSPATSVSVKPLSSVQVTSVAANRHLLSLSSGARRTRKSSSSVIRCGGIKEIGESEFSSTVLESAQPVLVEFVATWCGPCKLIYPAMEALSQEYGDKLTIVKIDHDANPKLIAEFKVYGLPHFILFKDGKEVPGSRREGAITKAKLKEYIDGLLNSISVA.

Residues 1-67 constitute a chloroplast transit peptide; sequence MDSIVSSSTI…TRKSSSSVIR (67 aa). A Thioredoxin domain is found at 68-177; the sequence is CGGIKEIGES…LKEYIDGLLN (110 aa). Residues C99 and C102 each act as nucleophile in the active site. A disulfide bond links C99 and C102.

Belongs to the thioredoxin family. As to expression, predominantly expressed in leaves.

The protein localises to the plastid. It localises to the chloroplast stroma. Probable thiol-disulfide oxidoreductase that may participate in various redox reactions. The protein is Thioredoxin X, chloroplastic (ATHX) of Arabidopsis thaliana (Mouse-ear cress).